Here is a 298-residue protein sequence, read N- to C-terminus: Probable 2-(5''-triphosphoribosyl)-3'-dephosphocoenzyme-A synthase 2 (298 aa).

The protein belongs to the CitG/MdcB family.

It catalyses the reaction 3'-dephospho-CoA + ATP = 2'-(5''-triphospho-alpha-D-ribosyl)-3'-dephospho-CoA + adenine. This Salmonella typhi protein is Probable 2-(5''-triphosphoribosyl)-3'-dephosphocoenzyme-A synthase 2.